A 273-amino-acid polypeptide reads, in one-letter code: Cysteine protease S273R (273 aa).

Active-site residues include histidine 168 and asparagine 187. Glutamine 226 is a substrate binding site. Cysteine 232 (nucleophile) is an active-site residue.

This sequence belongs to the peptidase C63 family.

The protein resides in the host cytoplasm. It localises to the virion. In terms of biological role, cysteine protease that plays several role during infection including processing of the structural polyprotein or inhibition of the host immune response. Catalyzes the maturation of the pp220 and pp62 polyprotein precursors into core-shell proteins. Plays a role in the disruption of host pyroptosis via specific cleavage of gasdermin D/GSDMD. In addition, strongly decreases the host cGAS-STING signaling by targeting IKBKE via its enzymatic activity. Also impairs host FOXJ1-mediated antiviral effect via degradation of FOXJ1. This is Cysteine protease S273R from African swine fever virus (isolate Tick/Malawi/Lil 20-1/1983) (ASFV).